Reading from the N-terminus, the 252-residue chain is Protein PYRAB15930 (252 aa).

This sequence belongs to the CinA family.

The polypeptide is Protein PYRAB15930 (Pyrococcus abyssi (strain GE5 / Orsay)).